We begin with the raw amino-acid sequence, 87 residues long: Toxin RelG (87 aa).

It belongs to the RelE toxin family. As to quaternary structure, interacts with cognate antitoxin RelF, which neutralizes the toxin. Also interacts with non-cognate antitoxin RelB in vitro, in M.smegmatis this neutralizes the toxicity of this toxin.

Its function is as follows. Toxic component of a type II toxin-antitoxin (TA) system. Has RNase activity and preferentially cleaves at the 3'-end of purine ribonucleotides. Overexpression in M.tuberculosis or M.smegmatis inhibits colony formation in a bacteriostatic rather than bacteriocidal fashion. Its toxic effect is neutralized by coexpression with cognate antitoxin RelB2 (shown only for M.smegmatis). Overexpression also increases the number of gentamicin-tolerant and levofloxacin-tolerant persister cells. In terms of biological role, in combination with cognate antitoxin RelF represses its own promoter. Has been seen to bind DNA in complex with antitoxin RelF but not alone. The chain is Toxin RelG (relG) from Mycobacterium tuberculosis (strain ATCC 25618 / H37Rv).